The sequence spans 202 residues: FMN-dependent NADH:quinone oxidoreductase 1 (202 aa).

FMN-binding positions include S9, 15–17, 95–98, and 139–142; these read SAS, MYNF, and TSGG.

Belongs to the azoreductase type 1 family. Homodimer. Requires FMN as cofactor.

It carries out the reaction 2 a quinone + NADH + H(+) = 2 a 1,4-benzosemiquinone + NAD(+). It catalyses the reaction N,N-dimethyl-1,4-phenylenediamine + anthranilate + 2 NAD(+) = 2-(4-dimethylaminophenyl)diazenylbenzoate + 2 NADH + 2 H(+). In terms of biological role, quinone reductase that provides resistance to thiol-specific stress caused by electrophilic quinones. Its function is as follows. Also exhibits azoreductase activity. Catalyzes the reductive cleavage of the azo bond in aromatic azo compounds to the corresponding amines. This Pseudomonas syringae pv. tomato (strain ATCC BAA-871 / DC3000) protein is FMN-dependent NADH:quinone oxidoreductase 1.